Reading from the N-terminus, the 387-residue chain is Succinate--CoA ligase [ADP-forming] subunit beta (387 aa).

In terms of domain architecture, ATP-grasp spans 9-244 (KALLQRYGVN…WSQDDAKEAE (236 aa)). ATP is bound by residues Lys-46, 53-55 (GRG), Glu-99, Leu-102, and Glu-107. Residues Asn-199 and Asp-213 each contribute to the Mg(2+) site. Substrate contacts are provided by residues Asn-264 and 321–323 (GIM).

The protein belongs to the succinate/malate CoA ligase beta subunit family. Heterotetramer of two alpha and two beta subunits. It depends on Mg(2+) as a cofactor.

The enzyme catalyses succinate + ATP + CoA = succinyl-CoA + ADP + phosphate. It carries out the reaction GTP + succinate + CoA = succinyl-CoA + GDP + phosphate. Its pathway is carbohydrate metabolism; tricarboxylic acid cycle; succinate from succinyl-CoA (ligase route): step 1/1. In terms of biological role, succinyl-CoA synthetase functions in the citric acid cycle (TCA), coupling the hydrolysis of succinyl-CoA to the synthesis of either ATP or GTP and thus represents the only step of substrate-level phosphorylation in the TCA. The beta subunit provides nucleotide specificity of the enzyme and binds the substrate succinate, while the binding sites for coenzyme A and phosphate are found in the alpha subunit. This chain is Succinate--CoA ligase [ADP-forming] subunit beta, found in Methylobacillus flagellatus (strain ATCC 51484 / DSM 6875 / VKM B-1610 / KT).